The primary structure comprises 147 residues: Hemoglobin subunit gamma-2 (147 aa).

In terms of domain architecture, Globin spans 3–147 (HFTEEDKATI…VASALSSRYH (145 aa)). Position 13 is a phosphothreonine (T13). A phosphoserine mark is found at S45, S51, and S53. An N6-acetyllysine modification is found at K60. H64 serves as a coordination point for heme b. K83 is subject to N6-acetyllysine. Position 93 (H93) interacts with heme b. Position 94 is an S-nitrosocysteine (C94). A phosphoserine mark is found at S140, S143, and S144.

The protein belongs to the globin family. As to quaternary structure, heterotetramer of two alpha chains and two gamma chains in fetal hemoglobin (Hb F). Red blood cells.

Gamma chains make up the fetal hemoglobin F, in combination with alpha chains. This is Hemoglobin subunit gamma-2 (HBG2) from Hylobates lar (Lar gibbon).